The sequence spans 1028 residues: Kinesin-like protein KIF28 (1028 aa).

Residues 11-358 enclose the Kinesin motor domain; that stretch reads SVRVAVRVRP…LRYAERAKKV (348 aa). 114–121 serves as a coordination point for ATP; sequence GQTGSGKS. Positions 460 to 523 constitute an FHA domain; sequence CDVGRAASNA…LQHLDRIILG (64 aa). The stretch at 873-902 forms a coiled coil; that stretch reads NQVPELYQKLLKLEQETELLRDVNRALRGE.

It belongs to the TRAFAC class myosin-kinesin ATPase superfamily. Kinesin family.

It localises to the mitochondrion membrane. In terms of biological role, microtubule-dependent motor protein required for mitochondrion morphology and transport of mitochondria in neuronal cells. In Mus musculus (Mouse), this protein is Kinesin-like protein KIF28.